Here is a 133-residue protein sequence, read N- to C-terminus: Small ribosomal subunit protein uS8c (133 aa).

2 disordered regions span residues 1 to 23 (MGNDAIDDVTTAPRNASSRGAET) and 44 to 133 (FSGN…HVWR). Polar residues-rich tracts occupy residues 12–23 (APRNASSRGAET) and 55–66 (TNRFPVSTSKYQ). Residues 67 to 81 (GRTRKARITTRRRVS) are compositionally biased toward basic residues. A compositionally biased stretch (basic and acidic residues) spans 114–133 (TDREARQKRIGGEAPRHVWR).

It belongs to the universal ribosomal protein uS8 family. Part of the 30S ribosomal subunit.

The protein resides in the plastid. It is found in the chloroplast. Its function is as follows. One of the primary rRNA binding proteins, it binds directly to 16S rRNA central domain where it helps coordinate assembly of the platform of the 30S subunit. The protein is Small ribosomal subunit protein uS8c (rps8) of Selaginella uncinata (Blue spike-moss).